Here is a 285-residue protein sequence, read N- to C-terminus: MKLCGFDIGLDQPFFLIAGPCVVESEQLQMDTAGTLKEITSSLGIPFIFKSSFDKANRSSGTSFRGPGREKGLEILAKVKRELGLPVLTDVHTEDDITEAAKVVDVLQTPAFLCRQTDFIRAVAQSGKPVNIKKGQFLAPHDMKNVIDKARAAAKEAGLPEDSFMACERGASFGYNNLVSDMRSLAIMRETGAPVVFDATHSVQLPGGQGTTSGGQREMVPVLSRAAVAVGVAGLFMETHPDPAKALSDGPNAVPLKHMKALLETLLALDQVTKKNAFLEDVFQS.

It belongs to the KdsA family.

It localises to the cytoplasm. The enzyme catalyses D-arabinose 5-phosphate + phosphoenolpyruvate + H2O = 3-deoxy-alpha-D-manno-2-octulosonate-8-phosphate + phosphate. It participates in carbohydrate biosynthesis; 3-deoxy-D-manno-octulosonate biosynthesis; 3-deoxy-D-manno-octulosonate from D-ribulose 5-phosphate: step 2/3. It functions in the pathway bacterial outer membrane biogenesis; lipopolysaccharide biosynthesis. The protein is 2-dehydro-3-deoxyphosphooctonate aldolase of Variovorax paradoxus (strain S110).